The sequence spans 251 residues: Tryptophan synthase alpha chain (251 aa).

Residues glutamate 46 and aspartate 57 each act as proton acceptor in the active site.

Belongs to the TrpA family. In terms of assembly, tetramer of two alpha and two beta chains.

It carries out the reaction (1S,2R)-1-C-(indol-3-yl)glycerol 3-phosphate + L-serine = D-glyceraldehyde 3-phosphate + L-tryptophan + H2O. Its pathway is amino-acid biosynthesis; L-tryptophan biosynthesis; L-tryptophan from chorismate: step 5/5. Its function is as follows. The alpha subunit is responsible for the aldol cleavage of indoleglycerol phosphate to indole and glyceraldehyde 3-phosphate. This chain is Tryptophan synthase alpha chain, found in Karelsulcia muelleri (strain GWSS) (Sulcia muelleri).